Here is a 253-residue protein sequence, read N- to C-terminus: Phosphonates import ATP-binding protein PhnC (253 aa).

In terms of domain architecture, ABC transporter spans 4-247 (VRFEGVTKRF…QAVAMIYRAG (244 aa)). Residue 36 to 43 (GLSGSGKS) coordinates ATP.

It belongs to the ABC transporter superfamily. Phosphonates importer (TC 3.A.1.9.1) family. As to quaternary structure, the complex is composed of two ATP-binding proteins (PhnC), two transmembrane proteins (PhnE) and a solute-binding protein (PhnD).

Its subcellular location is the cell membrane. It carries out the reaction phosphonate(out) + ATP + H2O = phosphonate(in) + ADP + phosphate + H(+). Its function is as follows. Part of the ABC transporter complex PhnCDE involved in phosphonates import. Responsible for energy coupling to the transport system. The sequence is that of Phosphonates import ATP-binding protein PhnC from Frankia casuarinae (strain DSM 45818 / CECT 9043 / HFP020203 / CcI3).